A 130-amino-acid polypeptide reads, in one-letter code: Ribosome-binding factor A (130 aa).

The disordered stretch occupies residues 111–130; that stretch reads RDLDDVGPGATSSDEDAEQR.

Belongs to the RbfA family. In terms of assembly, monomer. Binds 30S ribosomal subunits, but not 50S ribosomal subunits or 70S ribosomes.

Its subcellular location is the cytoplasm. Functionally, one of several proteins that assist in the late maturation steps of the functional core of the 30S ribosomal subunit. Associates with free 30S ribosomal subunits (but not with 30S subunits that are part of 70S ribosomes or polysomes). Required for efficient processing of 16S rRNA. May interact with the 5'-terminal helix region of 16S rRNA. The protein is Ribosome-binding factor A of Xanthomonas oryzae pv. oryzae (strain MAFF 311018).